The chain runs to 413 residues: RNA-binding protein 41 (413 aa).

Over residues 223–235 the composition is skewed to polar residues; it reads SVGDSGTAESPSL. The disordered stretch occupies residues 223–247; that stretch reads SVGDSGTAESPSLLQDKGKQAAQGK. A Phosphoserine modification is found at Ser232. An RRM domain is found at 309 to 387; it reads KVLYLKNLSP…KILVIEFGKN (79 aa).

May bind RNA. This chain is RNA-binding protein 41 (RBM41), found in Homo sapiens (Human).